We begin with the raw amino-acid sequence, 177 residues long: ATP-dependent protease subunit HslV (177 aa).

Residue T7 is part of the active site. Residues A162, C165, and T168 each coordinate Na(+).

It belongs to the peptidase T1B family. HslV subfamily. In terms of assembly, a double ring-shaped homohexamer of HslV is capped on each side by a ring-shaped HslU homohexamer. The assembly of the HslU/HslV complex is dependent on binding of ATP.

The protein resides in the cytoplasm. The catalysed reaction is ATP-dependent cleavage of peptide bonds with broad specificity.. With respect to regulation, allosterically activated by HslU binding. Functionally, protease subunit of a proteasome-like degradation complex believed to be a general protein degrading machinery. The sequence is that of ATP-dependent protease subunit HslV from Leptospira biflexa serovar Patoc (strain Patoc 1 / Ames).